We begin with the raw amino-acid sequence, 98 residues long: Essential MCU regulator, mitochondrial (98 aa).

Residues 52-72 (ITPFGLFGIIATVIPGLLIGA) form a helical membrane-spanning segment.

It belongs to the SMDT1/EMRE family.

It localises to the mitochondrion inner membrane. Essential regulatory subunit of the mitochondrial calcium uniporter (mcu) channel, a protein that mediates calcium uptake into mitochondria. This Anopheles gambiae (African malaria mosquito) protein is Essential MCU regulator, mitochondrial.